Consider the following 292-residue polypeptide: Acetyl-coenzyme A carboxylase carboxyl transferase subunit beta (292 aa).

The region spanning 29-292 (LWVKCSECGQ…HGVKELVQTN (264 aa)) is the CoA carboxyltransferase N-terminal domain. 4 residues coordinate Zn(2+): C33, C36, C52, and C55. The C4-type zinc finger occupies 33-55 (CSECGQVAYRKDLISNFNVCSNC).

Belongs to the AccD/PCCB family. Acetyl-CoA carboxylase is a heterohexamer composed of biotin carboxyl carrier protein (AccB), biotin carboxylase (AccC) and two subunits each of ACCase subunit alpha (AccA) and ACCase subunit beta (AccD). It depends on Zn(2+) as a cofactor.

Its subcellular location is the cytoplasm. It catalyses the reaction N(6)-carboxybiotinyl-L-lysyl-[protein] + acetyl-CoA = N(6)-biotinyl-L-lysyl-[protein] + malonyl-CoA. Its pathway is lipid metabolism; malonyl-CoA biosynthesis; malonyl-CoA from acetyl-CoA: step 1/1. Its function is as follows. Component of the acetyl coenzyme A carboxylase (ACC) complex. Biotin carboxylase (BC) catalyzes the carboxylation of biotin on its carrier protein (BCCP) and then the CO(2) group is transferred by the transcarboxylase to acetyl-CoA to form malonyl-CoA. The protein is Acetyl-coenzyme A carboxylase carboxyl transferase subunit beta of Prochlorococcus marinus subsp. pastoris (strain CCMP1986 / NIES-2087 / MED4).